The sequence spans 486 residues: Ribulose bisphosphate carboxylase large chain (486 aa).

Substrate is bound by residues Asn-126 and Thr-176. The active-site Proton acceptor is Lys-178. Lys-180 is a binding site for substrate. Residues Lys-204, Asp-206, and Glu-207 each contribute to the Mg(2+) site. The residue at position 204 (Lys-204) is an N6-carboxylysine. Residue His-296 is the Proton acceptor of the active site. Residues Arg-297, His-329, and Ser-381 each contribute to the substrate site.

Belongs to the RuBisCO large chain family. Type I subfamily. In terms of assembly, heterohexadecamer of 8 large chains and 8 small chains. The cofactor is Mg(2+).

The enzyme catalyses 2 (2R)-3-phosphoglycerate + 2 H(+) = D-ribulose 1,5-bisphosphate + CO2 + H2O. It carries out the reaction D-ribulose 1,5-bisphosphate + O2 = 2-phosphoglycolate + (2R)-3-phosphoglycerate + 2 H(+). RuBisCO catalyzes two reactions: the carboxylation of D-ribulose 1,5-bisphosphate, the primary event in carbon dioxide fixation, as well as the oxidative fragmentation of the pentose substrate. Both reactions occur simultaneously and in competition at the same active site. The chain is Ribulose bisphosphate carboxylase large chain from Sinorhizobium medicae (strain WSM419) (Ensifer medicae).